Here is a 139-residue protein sequence, read N- to C-terminus: Small ribosomal subunit protein uS12m (139 aa).

The tract at residues 1-21 (MLSTLYQNDLKKKRNRRRNRS) is disordered. Residues 11–20 (KKKRNRRRNR) are compositionally biased toward basic residues.

It belongs to the universal ribosomal protein uS12 family.

Its subcellular location is the mitochondrion. In terms of biological role, protein S12 is involved in the translation initiation step. This chain is Small ribosomal subunit protein uS12m (RPS12), found in Paramecium tetraurelia.